A 147-amino-acid polypeptide reads, in one-letter code: Small ribosomal subunit protein uS12 (147 aa).

The protein belongs to the universal ribosomal protein uS12 family. In terms of assembly, part of the 30S ribosomal subunit.

Its function is as follows. With S4 and S5 plays an important role in translational accuracy. Located at the interface of the 30S and 50S subunits. This Pyrobaculum arsenaticum (strain DSM 13514 / JCM 11321 / PZ6) protein is Small ribosomal subunit protein uS12.